Consider the following 540-residue polypeptide: Ribonuclease Y (540 aa).

A helical membrane pass occupies residues 4-24 (TILVPVAVAIVSVLVGGCAGY). The 64-residue stretch at 230–293 (TVSVVNLPSD…EIAKRALERL (64 aa)) folds into the KH domain. In terms of domain architecture, HD spans 356 to 449 (VLSHSIEVGK…VVAADTISSA (94 aa)).

This sequence belongs to the RNase Y family.

The protein resides in the cell membrane. Its function is as follows. Endoribonuclease that initiates mRNA decay. The polypeptide is Ribonuclease Y (Lactobacillus johnsonii (strain CNCM I-12250 / La1 / NCC 533)).